We begin with the raw amino-acid sequence, 237 residues long: MVLQYPQNKILVLSDHPHNFSKTQFLQDLFHCSSTGISIVKDQTWENRYYKVHFDLYIDSCKDIPVWVEEFITPECEPLRNVMAGIILITDIRQTKPQELLHQFMIAAHRNTFVVLVNVNEEVEQDEIDELNEIWSNAFTNVIEFVNWKRSKPTVNHNDYGEKLGLDRIQEIIDTHDWLNCEVLPATKIREEIPNEMPLEQIIRNLQSARLKYKSIENSSEADAFANEMADELSRYL.

Belongs to the IRC6 family.

Involved in gross chromosomal rearrangements (GCRs) and telomere healing. This Saccharomyces cerevisiae (strain RM11-1a) (Baker's yeast) protein is Increased recombination centers protein 6 (IRC6).